We begin with the raw amino-acid sequence, 535 residues long: Dual specificity calcium/calmodulin-dependent 3',5'-cyclic nucleotide phosphodiesterase 1B (535 aa).

Residues 1-21 (MELSPRSPPEMLESDCPSPLE) are disordered. Serine 7 and serine 14 each carry phosphoserine. Calmodulin-binding stretches follow at residues 27–47 (SKKM…QLEN) and 117–140 (EKPK…MFRR). The region spanning 145–502 (VGPTYSTAVH…QKWKERAASG (358 aa)) is the PDEase domain. Residue histidine 222 is the Proton donor of the active site. The Zn(2+) site is built by histidine 226, histidine 262, aspartate 263, and aspartate 369. Aspartate 263 contributes to the Mg(2+) binding site. Disordered regions lie at residues 445-474 (PLTD…GDPN) and 495-535 (WKER…GNLD). The span at 454–463 (KSQPSFQWRQ) shows a compositional bias: polar residues. Phosphoserine occurs at positions 465 and 513.

The protein belongs to the cyclic nucleotide phosphodiesterase family. PDE1 subfamily. As to quaternary structure, homodimer. Zn(2+) is required as a cofactor. Requires Mg(2+) as cofactor. As to expression, expressed in brain.

It is found in the cytoplasm. The protein localises to the cytosol. The catalysed reaction is a nucleoside 3',5'-cyclic phosphate + H2O = a nucleoside 5'-phosphate + H(+). The enzyme catalyses 3',5'-cyclic GMP + H2O = GMP + H(+). It catalyses the reaction 3',5'-cyclic AMP + H2O = AMP + H(+). Its activity is regulated as follows. Type I PDE are activated by the binding of calmodulin in the presence of Ca(2+). Functionally, cyclic nucleotide phosphodiesterase with a dual specificity for the second messengers cAMP and cGMP, which are key regulators of many important physiological processes. Has a preference for cGMP as a substrate. This is Dual specificity calcium/calmodulin-dependent 3',5'-cyclic nucleotide phosphodiesterase 1B from Rattus norvegicus (Rat).